A 230-amino-acid chain; its full sequence is Urease accessory protein UreG (230 aa).

A disordered region spans residues 1–31 (MPPHFLSADSTGQPHRHADRPKRVRTPGEPL). A compositionally biased stretch (basic residues) spans 14–25 (PHRHADRPKRVR). Residue 37 to 44 (GPVGSGKT) coordinates GTP.

Belongs to the SIMIBI class G3E GTPase family. UreG subfamily. Homodimer. UreD, UreF and UreG form a complex that acts as a GTP-hydrolysis-dependent molecular chaperone, activating the urease apoprotein by helping to assemble the nickel containing metallocenter of UreC. The UreE protein probably delivers the nickel.

Its subcellular location is the cytoplasm. Its function is as follows. Facilitates the functional incorporation of the urease nickel metallocenter. This process requires GTP hydrolysis, probably effectuated by UreG. The chain is Urease accessory protein UreG from Mycobacterium sp. (strain JLS).